The primary structure comprises 358 residues: Trans-enoyl reductase milB (358 aa).

Residues valine 48–lysine 51, alanine 170–threonine 173, serine 193–histidine 196, tyrosine 211, leucine 258–aspartate 259, and valine 349–arginine 350 contribute to the NADP(+) site.

Belongs to the zinc-containing alcohol dehydrogenase family. As to quaternary structure, monomer.

The enzyme catalyses 10 malonyl-CoA + acetyl-CoA + 3 AH2 + 8 NADPH + 18 H(+) = cordypyrone A + 3 A + 10 CO2 + 8 NADP(+) + 11 CoA + 8 H2O. It participates in secondary metabolite biosynthesis. Functionally, trans-enoyl reductase; part of the gene cluster that mediates the biosynthesis of cordypyrones A and B, 2 pyrones that show modest activities against pathogenic bacteria including methicillin-resistant Staphylococcus aureus (MRSA), Mycobacterium tuberculosis and Bacillus cereus. The HR-PKS milA catalyzes the formation of cordypyrones A via condensation of one acetate with 10 malonate units. Since milA lacks an enoyl reductase domain, the 2 beta-keto processing domains DH and KR of milA collaborate with the trans-enoyl reductase milB to catalyze the different levels of reduction. The cytochrome P450 monooxygenase milC then hydroxylates the C-22 of cordypyrones A to yield cordypyrones B. This is Trans-enoyl reductase milB from Cordyceps militaris (strain CM01) (Caterpillar fungus).